The following is a 411-amino-acid chain: Exodeoxyribonuclease 7 large subunit (411 aa).

This sequence belongs to the XseA family. In terms of assembly, heterooligomer composed of large and small subunits.

It is found in the cytoplasm. The enzyme catalyses Exonucleolytic cleavage in either 5'- to 3'- or 3'- to 5'-direction to yield nucleoside 5'-phosphates.. In terms of biological role, bidirectionally degrades single-stranded DNA into large acid-insoluble oligonucleotides, which are then degraded further into small acid-soluble oligonucleotides. The sequence is that of Exodeoxyribonuclease 7 large subunit from Mycobacterium sp. (strain KMS).